The primary structure comprises 784 residues: ATP-dependent zinc metalloprotease FTSH 9, chloroplastic/mitochondrial (784 aa).

Low complexity-rich tracts occupy residues 1–12, 24–34, and 42–53; these read MSALQASLLLRP, PLPSSSASFPR, and PLPLRALASEGP. Residues 1 to 47 constitute a chloroplast and mitochondrion transit peptide; it reads MSALQASLLLRPLPSPLPPRRRLPLPSSSASFPRAGHHRRLPLPLRA. A disordered region spans residues 1–71; the sequence is MSALQASLLL…DPPPPELPAA (71 aa). Over residues 54-69 the composition is skewed to pro residues; it reads QPAPSPAPDPPPPELP. Transmembrane regions (helical) follow at residues 104 to 124 and 267 to 287; these read WVLA…DWVV and IFST…GAAA. Residue 368–375 coordinates ATP; it reads GSPGTGKT. Residue H601 coordinates Zn(2+). E602 is a catalytic residue. 2 residues coordinate Zn(2+): H605 and D679.

This sequence in the N-terminal section; belongs to the AAA ATPase family. The protein in the C-terminal section; belongs to the peptidase M41 family. The cofactor is Zn(2+).

The protein localises to the mitochondrion membrane. Its subcellular location is the plastid. It localises to the chloroplast thylakoid membrane. Its function is as follows. Probable ATP-dependent zinc metallopeptidase. This Oryza sativa subsp. japonica (Rice) protein is ATP-dependent zinc metalloprotease FTSH 9, chloroplastic/mitochondrial (FTSH9).